We begin with the raw amino-acid sequence, 372 residues long: tRNA-specific 2-thiouridylase MnmA (372 aa).

Residues 16 to 23 (GMSGGVDS) and M42 contribute to the ATP site. Residues 102-104 (NPD) are interaction with target base in tRNA. C107 functions as the Nucleophile in the catalytic mechanism. Cysteines 107 and 205 form a disulfide. ATP is bound at residue G132. The interaction with tRNA stretch occupies residues 155–157 (KDQ). C205 acts as the Cysteine persulfide intermediate in catalysis. Residues 317-318 (RY) are interaction with tRNA.

It belongs to the MnmA/TRMU family.

The protein resides in the cytoplasm. The enzyme catalyses S-sulfanyl-L-cysteinyl-[protein] + uridine(34) in tRNA + AH2 + ATP = 2-thiouridine(34) in tRNA + L-cysteinyl-[protein] + A + AMP + diphosphate + H(+). Catalyzes the 2-thiolation of uridine at the wobble position (U34) of tRNA, leading to the formation of s(2)U34. In Shewanella oneidensis (strain ATCC 700550 / JCM 31522 / CIP 106686 / LMG 19005 / NCIMB 14063 / MR-1), this protein is tRNA-specific 2-thiouridylase MnmA.